Reading from the N-terminus, the 499-residue chain is Glutamyl-tRNA(Gln) amidotransferase subunit B, chloroplastic/mitochondrial (499 aa).

The protein belongs to the GatB/GatE family. GatB subfamily. In terms of assembly, subunit of the heterotrimeric GatCAB amidotransferase (AdT) complex, composed of A, B and C subunits.

It is found in the mitochondrion. The protein resides in the plastid. The protein localises to the chloroplast. The catalysed reaction is L-glutamyl-tRNA(Gln) + L-glutamine + ATP + H2O = L-glutaminyl-tRNA(Gln) + L-glutamate + ADP + phosphate + H(+). Functionally, allows the formation of correctly charged Gln-tRNA(Gln) through the transamidation of misacylated Glu-tRNA(Gln) in chloroplasts and mitochondria. The reaction takes place in the presence of glutamine and ATP through an activated gamma-phospho-Glu-tRNA(Gln). The protein is Glutamyl-tRNA(Gln) amidotransferase subunit B, chloroplastic/mitochondrial of Ostreococcus lucimarinus (strain CCE9901).